Consider the following 362-residue polypeptide: Chalcone synthase A (362 aa).

Cysteine 168 is a catalytic residue.

Belongs to the thiolase-like superfamily. Chalcone/stilbene synthases family.

It catalyses the reaction (E)-4-coumaroyl-CoA + 3 malonyl-CoA + 3 H(+) = 2',4,4',6'-tetrahydroxychalcone + 3 CO2 + 4 CoA. Its pathway is secondary metabolite biosynthesis; flavonoid biosynthesis. Functionally, the primary product of this enzyme is 4,2',4',6'-tetrahydroxychalcone (also termed naringenin-chalcone or chalcone) which can under specific conditions spontaneously isomerize into naringenin. This is Chalcone synthase A (CHSA) from Ipomoea trifida (Morning glory).